Consider the following 401-residue polypeptide: Argininosuccinate synthase (401 aa).

Residue 8–16 coordinates ATP; that stretch reads AYSGGLDTS. An L-citrulline-binding site is contributed by Y85. G115 contacts ATP. Positions 117, 121, and 122 each coordinate L-aspartate. N121 contributes to the L-citrulline binding site. The L-citrulline site is built by R125, S173, E258, and Y270.

Belongs to the argininosuccinate synthase family. Type 1 subfamily. As to quaternary structure, homotetramer.

The protein resides in the cytoplasm. It carries out the reaction L-citrulline + L-aspartate + ATP = 2-(N(omega)-L-arginino)succinate + AMP + diphosphate + H(+). The protein operates within amino-acid biosynthesis; L-arginine biosynthesis; L-arginine from L-ornithine and carbamoyl phosphate: step 2/3. The protein is Argininosuccinate synthase of Staphylococcus carnosus (strain TM300).